The chain runs to 253 residues: Indole-3-glycerol phosphate synthase (253 aa).

This sequence belongs to the TrpC family.

It carries out the reaction 1-(2-carboxyphenylamino)-1-deoxy-D-ribulose 5-phosphate + H(+) = (1S,2R)-1-C-(indol-3-yl)glycerol 3-phosphate + CO2 + H2O. It participates in amino-acid biosynthesis; L-tryptophan biosynthesis; L-tryptophan from chorismate: step 4/5. This chain is Indole-3-glycerol phosphate synthase, found in Bacillus cereus (strain ATCC 14579 / DSM 31 / CCUG 7414 / JCM 2152 / NBRC 15305 / NCIMB 9373 / NCTC 2599 / NRRL B-3711).